The sequence spans 742 residues: Ectonucleotide pyrophosphatase/phosphodiesterase 1 (742 aa).

Topologically, residues 1–113 (MELQNDLESL…TGFHSKVPFK (113 aa)) are cytoplasmic. A helical membrane pass occupies residues 114–134 (IIFRTLFGSLVFAIFLILMIN). At 135–742 (IAKPHHSTRV…SIDDLVDSDT (608 aa)) the chain is on the extracellular side. N161 and N204 each carry an N-linked (GlcNAc...) asparagine glycan. Residues 168-545 (PLTIVISLDG…VFTIGSHGYD (378 aa)) form a phosphodiesterase region. The Nucleophile role is filled by T219. N-linked (GlcNAc...) asparagine glycans are attached at residues N264, N296, and N403. Acidic residues predominate over residues 640-659 (EETEQDNVDNDNDDNDDGNT). 2 disordered regions span residues 640–670 (EETEQDNVDNDNDDNDDGNTDEIAAMPSSSL) and 686–711 (TLLGETSPSSRSSSSSSIQASATAST). Over residues 691 to 711 (TSPSSRSSSSSSIQASATAST) the composition is skewed to low complexity.

It belongs to the nucleotide pyrophosphatase/phosphodiesterase family. Autophosphorylated as part of the catalytic cycle of phosphodiesterase/pyrophosphatase activity. Post-translationally, N-glycosylated.

It localises to the membrane. It catalyses the reaction Hydrolytically removes 5'-nucleotides successively from the 3'-hydroxy termini of 3'-hydroxy-terminated oligonucleotides.. It carries out the reaction a ribonucleoside 5'-triphosphate + H2O = a ribonucleoside 5'-phosphate + diphosphate + H(+). The catalysed reaction is a 2'-deoxyribonucleoside 5'-triphosphate + H2O = a 2'-deoxyribonucleoside 5'-phosphate + diphosphate + H(+). Mediates extracellular nucleotide derived phosphate hydrolysis along with NPP2 and PHO5. The chain is Ectonucleotide pyrophosphatase/phosphodiesterase 1 (NPP1) from Saccharomyces cerevisiae (strain ATCC 204508 / S288c) (Baker's yeast).